A 292-amino-acid polypeptide reads, in one-letter code: 11-beta-hydroxysteroid dehydrogenase 1 (292 aa).

Residues 7–24 (YLLPILGIFLAYYYYSAN) traverse the membrane as a helical segment.

It belongs to the short-chain dehydrogenases/reductases (SDR) family. In terms of assembly, homodimer. As to expression, expressed highest in liver and ovaries (corpora lutea, granulosa cells, thecal, uterine caruncle and intercarunculer tissues), lower expression in kidney and spleen, and lowest in the adrenal.

The protein resides in the endoplasmic reticulum membrane. The catalysed reaction is an 11beta-hydroxysteroid + NADP(+) = an 11-oxosteroid + NADPH + H(+). It catalyses the reaction corticosterone + NADP(+) = 11-dehydrocorticosterone + NADPH + H(+). It carries out the reaction cortisone + NADPH + H(+) = cortisol + NADP(+). The enzyme catalyses a 7beta-hydroxysteroid + NADP(+) = a 7-oxosteroid + NADPH + H(+). The catalysed reaction is 7-oxocholesterol + NADPH + H(+) = 7beta-hydroxycholesterol + NADP(+). It catalyses the reaction chenodeoxycholate + NADP(+) = 7-oxolithocholate + NADPH + H(+). It carries out the reaction 7-oxolithocholate + NADPH + H(+) = ursodeoxycholate + NADP(+). The enzyme catalyses glycochenodeoxycholate + NADP(+) = 7-oxoglycolithocholate + NADPH + H(+). The catalysed reaction is taurochenodeoxycholate + NADP(+) = 7-oxotaurolithocholate + NADPH + H(+). It catalyses the reaction tauroursodeoxycholate + NADP(+) = 7-oxotaurolithocholate + NADPH + H(+). It carries out the reaction glycoursodeoxycholate + NADP(+) = 7-oxoglycolithocholate + NADPH + H(+). The enzyme catalyses 7-oxopregnenolone + NADPH + H(+) = 7beta-hydroxypregnenolone + NADP(+). The catalysed reaction is 3beta,7alpha-dihydroxyandrost-5-en-17-one + NADP(+) = 3beta-hydroxy-5-androstene-7,17-dione + NADPH + H(+). It catalyses the reaction 3beta-hydroxy-5-androstene-7,17-dione + NADPH + H(+) = 3beta,7beta-dihydroxyandrost-5-en-17-one + NADP(+). It carries out the reaction 3beta-hydroxy-5alpha-androstane-7,17-dione + NADPH + H(+) = 3beta,7beta-dihydroxy-5alpha-androstan-17-one + NADP(+). Controls the reversible conversion of biologically active glucocorticoids such as cortisone to cortisol, and 11-dehydrocorticosterone to corticosterone in the presence of NADP(H). Participates in the corticosteroid receptor-mediated anti-inflammatory response, as well as metabolic and homeostatic processes. Plays a role in the secretion of aqueous humor in the eye, maintaining a normotensive, intraocular environment. Bidirectional in vitro, predominantly functions as a reductase in vivo, thereby increasing the concentration of active glucocorticoids. It has broad substrate specificity, besides glucocorticoids, it accepts other steroid and sterol substrates. Interconverts 7-oxo- and 7-hydroxy-neurosteroids such as 7-oxopregnenolone and 7beta-hydroxypregnenolone, 7-oxodehydroepiandrosterone (3beta-hydroxy-5-androstene-7,17-dione) and 7beta-hydroxydehydroepiandrosterone (3beta,7beta-dihydroxyandrost-5-en-17-one), among others. Catalyzes the stereo-specific conversion of the major dietary oxysterol, 7-ketocholesterol (7-oxocholesterol), into the more polar 7-beta-hydroxycholesterol metabolite. 7-oxocholesterol is one of the most important oxysterols, it participates in several events such as induction of apoptosis, accumulation in atherosclerotic lesions, lipid peroxidation, and induction of foam cell formation. Mediates the 7-oxo reduction of 7-oxolithocholate mainly to chenodeoxycholate, and to a lesser extent to ursodeoxycholate, both in its free form and when conjugated to glycine or taurine, providing a link between glucocorticoid activation and bile acid metabolism. Catalyzes the synthesis of 7-beta-25-dihydroxycholesterol from 7-oxo-25-hydroxycholesterol in vitro, which acts as a ligand for the G-protein-coupled receptor (GPCR) Epstein-Barr virus-induced gene 2 (EBI2) and may thereby regulate immune cell migration. The protein is 11-beta-hydroxysteroid dehydrogenase 1 of Bos taurus (Bovine).